The following is a 1668-amino-acid chain: DNA polymerase (1668 aa).

DOD-type homing endonuclease domains follow at residues 739–872 (LLGY…SLGV) and 1191–1330 (LIGL…LVGV).

It belongs to the DNA polymerase type-B family. In terms of processing, this protein undergoes a protein self splicing that involves a post-translational excision of the intervening region (intein) followed by peptide ligation.

It catalyses the reaction DNA(n) + a 2'-deoxyribonucleoside 5'-triphosphate = DNA(n+1) + diphosphate. Its function is as follows. In addition to polymerase activity, this DNA polymerase exhibits 3' to 5' exonuclease activity. Functionally, PI-ThyI and PI-ThyII are endonucleases. PI-ThyI cleaves the inteinless sequence of the Thy DNA pol gene. It requires a 21-bp minimal recognition sequence. The chain is DNA polymerase (pol) from Thermococcus hydrothermalis.